Reading from the N-terminus, the 580-residue chain is Arginine--tRNA ligase (580 aa).

Residues 127–137 carry the 'HIGH' region motif; that stretch reads PNLAKEMHVGH.

This sequence belongs to the class-I aminoacyl-tRNA synthetase family. Monomer.

The protein localises to the cytoplasm. The enzyme catalyses tRNA(Arg) + L-arginine + ATP = L-arginyl-tRNA(Arg) + AMP + diphosphate. The sequence is that of Arginine--tRNA ligase from Idiomarina loihiensis (strain ATCC BAA-735 / DSM 15497 / L2-TR).